A 420-amino-acid chain; its full sequence is UDP-N-acetylglucosamine 1-carboxyvinyltransferase (420 aa).

Residue 23–24 participates in phosphoenolpyruvate binding; sequence KN. Position 92 (Arg-92) interacts with UDP-N-acetyl-alpha-D-glucosamine. Cys-116 serves as the catalytic Proton donor. Cys-116 carries the post-translational modification 2-(S-cysteinyl)pyruvic acid O-phosphothioketal. Residues 121–125, 161–164, Asp-306, and Ile-328 contribute to the UDP-N-acetyl-alpha-D-glucosamine site; these read RPVDL and KVSV.

The protein belongs to the EPSP synthase family. MurA subfamily.

It localises to the cytoplasm. The enzyme catalyses phosphoenolpyruvate + UDP-N-acetyl-alpha-D-glucosamine = UDP-N-acetyl-3-O-(1-carboxyvinyl)-alpha-D-glucosamine + phosphate. It functions in the pathway cell wall biogenesis; peptidoglycan biosynthesis. Its function is as follows. Cell wall formation. Adds enolpyruvyl to UDP-N-acetylglucosamine. The sequence is that of UDP-N-acetylglucosamine 1-carboxyvinyltransferase from Photobacterium profundum (strain SS9).